The sequence spans 698 residues: Long-chain-fatty-acid--CoA ligase 1 (698 aa).

The residue at position 1 (Met-1) is an N-acetylmethionine. At Tyr-9 the chain carries 3'-nitrotyrosine. A helical; Signal-anchor for type III membrane protein transmembrane segment spans residues 25 to 45 (LPTNTLMGFGAFAALTTFWYA). Residues 46 to 698 (TRPKPLKPPC…IDDLYSTIKV (653 aa)) lie on the Cytoplasmic side of the membrane. Tyr-84 is subject to Phosphotyrosine. Residue Ser-135 is glycosylated (O-linked (GlcNAc) serine). An N6-acetyllysine mark is found at Lys-207, Lys-356, and Lys-386. Ser-620 carries the phosphoserine modification. Lys-632 carries the post-translational modification N6-acetyllysine.

The protein belongs to the ATP-dependent AMP-binding enzyme family. It depends on Mg(2+) as a cofactor. Highly expressed in liver, heart, skeletal muscle, kidney and erythroid cells, and to a lesser extent in brain, lung, placenta and pancreas.

The protein resides in the mitochondrion outer membrane. It is found in the peroxisome membrane. It localises to the microsome membrane. Its subcellular location is the endoplasmic reticulum membrane. The catalysed reaction is a long-chain fatty acid + ATP + CoA = a long-chain fatty acyl-CoA + AMP + diphosphate. It carries out the reaction (5Z,8Z,11Z,14Z)-eicosatetraenoate + ATP + CoA = (5Z,8Z,11Z,14Z)-eicosatetraenoyl-CoA + AMP + diphosphate. The enzyme catalyses 3,7,11,15-tetramethylhexadecanoate + ATP + CoA = phytanoyl-CoA + AMP + diphosphate. It catalyses the reaction hexadecanoate + ATP + CoA = hexadecanoyl-CoA + AMP + diphosphate. The catalysed reaction is (E)-hexadec-2-enoate + ATP + CoA = (2E)-hexadecenoyl-CoA + AMP + diphosphate. It carries out the reaction 2,6,10,14-tetramethylpentadecanoate + ATP + CoA = pristanoyl-CoA + AMP + diphosphate. The enzyme catalyses 14,15-epoxy-(5Z,8Z,11Z)-eicosatrienoate + ATP + CoA = 14,15-epoxy-(5Z,8Z,11Z)-eicosatrienoyl-CoA + AMP + diphosphate. It catalyses the reaction 5-hydroxy-(6E,8Z,11Z,14Z)-eicosatetraenoate + ATP + CoA = 5-hydroxy-(6E,8Z,11Z,14Z)-eicosatetraenoyl-CoA + AMP + diphosphate. The catalysed reaction is 12-hydroxy-(5Z,8Z,10E,14Z)-eicosatetraenoate + ATP + CoA = 12-hydroxy-(5Z,8Z,10E,14Z)-eicosatetraenoyl-CoA + AMP + diphosphate. It carries out the reaction 15-hydroxy-(5Z,8Z,11Z,13E)-eicosatetraenoate + ATP + CoA = 15-hydroxy-(5Z,8Z,11Z,13E)-eicosatetraenoyl-CoA + AMP + diphosphate. The enzyme catalyses (9Z)-octadecenoate + ATP + CoA = (9Z)-octadecenoyl-CoA + AMP + diphosphate. Its activity is regulated as follows. Inhibited at high temperature and by arachidonate. Functionally, catalyzes the conversion of long-chain fatty acids to their active form acyl-CoAs for both synthesis of cellular lipids, and degradation via beta-oxidation. Preferentially uses palmitoleate, oleate and linoleate. Preferentially activates arachidonate than epoxyeicosatrienoic acids (EETs) or hydroxyeicosatrienoic acids (HETEs). This is Long-chain-fatty-acid--CoA ligase 1 from Homo sapiens (Human).